The chain runs to 884 residues: Valine--tRNA ligase (884 aa).

The 'HIGH' region signature appears at 46 to 56 (PNVTGKLHLGH). The 'KMSKS' region motif lies at 520–524 (KMSKS). Position 523 (Lys-523) interacts with ATP. Residues 809–844 (LADLLNVEEELARLEKELAKWQKELNMVGKKLSNER) adopt a coiled-coil conformation.

It belongs to the class-I aminoacyl-tRNA synthetase family. ValS type 1 subfamily. Monomer.

It is found in the cytoplasm. The enzyme catalyses tRNA(Val) + L-valine + ATP = L-valyl-tRNA(Val) + AMP + diphosphate. In terms of biological role, catalyzes the attachment of valine to tRNA(Val). As ValRS can inadvertently accommodate and process structurally similar amino acids such as threonine, to avoid such errors, it has a 'posttransfer' editing activity that hydrolyzes mischarged Thr-tRNA(Val) in a tRNA-dependent manner. In Streptococcus agalactiae serotype Ia (strain ATCC 27591 / A909 / CDC SS700), this protein is Valine--tRNA ligase.